The following is a 132-amino-acid chain: Small ribosomal subunit protein uS8 (132 aa).

This sequence belongs to the universal ribosomal protein uS8 family. Part of the 30S ribosomal subunit. Contacts proteins S5 and S12.

One of the primary rRNA binding proteins, it binds directly to 16S rRNA central domain where it helps coordinate assembly of the platform of the 30S subunit. The sequence is that of Small ribosomal subunit protein uS8 from Sinorhizobium fredii (strain NBRC 101917 / NGR234).